We begin with the raw amino-acid sequence, 278 residues long: Tumor necrosis factor ligand superfamily member 6 (278 aa).

Topologically, residues 1-77 (MQQPVNYPCP…SPLKKKDNIE (77 aa)) are cytoplasmic. A disordered region spans residues 26 to 68 (PGSVFSCPSSGPRGPGQRRPPPPPPPPSPLPPPSQPPPLPPLS). Residues 33 to 42 (PSSGPRGPGQ) show a composition bias toward low complexity. A compositionally biased stretch (pro residues) spans 43–68 (RRPPPPPPPPSPLPPPSQPPPLPPLS). Residues 78–99 (LWLPVIFFMVLVALVGMGLGMY) traverse the membrane as a helical; Signal-anchor for type II membrane protein segment. Residues 100–278 (QLFHLQKELA…SKTFFGLYKL (179 aa)) are Extracellular-facing. N-linked (GlcNAc...) asparagine glycosylation is present at Asn116. Residues 125-135 (EKQIANPSTPS) show a composition bias toward polar residues. Residues 125 to 147 (EKQIANPSTPSETKKPRSVAHLT) form a disordered region. A THD domain is found at 142–278 (SVAHLTGNPR…SKTFFGLYKL (137 aa)). Cys199 and Cys230 are oxidised to a cystine. Asn247 and Asn257 each carry an N-linked (GlcNAc...) asparagine glycan.

This sequence belongs to the tumor necrosis factor family. As to quaternary structure, homotrimer. Interacts with ARHGAP9, BAIAP2L1, BTK, CACNB3, CACNB4, CRK, DLG2, DNMBP, DOCK4, EPS8L3, FGR, FYB1, FYN, HCK, ITK, ITSN2, KALRN, LYN, MACC1, MIA, MPP4, MYO15A, NCF1, NCK1, NCK2, NCKIPSD, OSTF1, PIK3R1, PSTPIP1, RIMBP3C, SAMSN1, SH3GL3, SH3PXD2B, SH3PXD2A, SH3RF2, SKAP2, SNX33, SNX9, SORBS3, SPTA1, SRC, SRGAP1, SRGAP2, SRGAP3, TEC, TJP3 and YES1. Post-translationally, the soluble form derives from the membrane form by proteolytic processing. The membrane-bound form undergoes two successive intramembrane proteolytic cleavages. The first one is processed by ADAM10 producing an N-terminal fragment, which lacks the receptor-binding extracellular domain. This ADAM10-processed FasL (FasL APL) remnant form is still membrane anchored and further processed by SPPL2A that liberates the FasL intracellular domain (FasL ICD). FasL shedding by ADAM10 is a prerequisite for subsequent intramembrane cleavage by SPPL2A in T-cells. In terms of processing, phosphorylated by FGR on tyrosine residues; this is required for ubiquitination and subsequent internalization. N-glycosylated. Post-translationally, monoubiquitinated. As to expression, expressed in activated splenocytes and thymocytes. Moderate or weak expression found in small intestines, kidney and lung.

The protein resides in the cell membrane. It is found in the cytoplasmic vesicle lumen. The protein localises to the lysosome lumen. Its subcellular location is the secreted. It localises to the nucleus. Functionally, cytokine that binds to TNFRSF6/FAS, a receptor that transduces the apoptotic signal into cells. Involved in cytotoxic T-cell-mediated apoptosis, natural killer cell-mediated apoptosis and in T-cell development. Initiates fratricidal/suicidal activation-induced cell death (AICD) in antigen-activated T-cells contributing to the termination of immune responses. TNFRSF6/FAS-mediated apoptosis also has a role in the induction of peripheral tolerance. Binds to TNFRSF6B/DcR3, a decoy receptor that blocks apoptosis. Its function is as follows. Induces FAS-mediated activation of NF-kappa-B, initiating non-apoptotic signaling pathways. Can induce apoptosis but does not appear to be essential for this process. In terms of biological role, cytoplasmic form induces gene transcription inhibition. The sequence is that of Tumor necrosis factor ligand superfamily member 6 (Faslg) from Rattus norvegicus (Rat).